The chain runs to 202 residues: Na(+)-translocating NADH-quinone reductase subunit E (202 aa).

A run of 6 helical transmembrane segments spans residues 11–31, 35–55, 81–101, 114–134, 144–164, and 180–200; these read SVFI…FLAM, INAA…TVPA, FLSF…MEMV, GVFL…LFMV, VVYG…LAGI, and LGIT…FGGI.

The protein belongs to the NqrDE/RnfAE family. Composed of six subunits; NqrA, NqrB, NqrC, NqrD, NqrE and NqrF.

The protein localises to the cell inner membrane. It catalyses the reaction a ubiquinone + n Na(+)(in) + NADH + H(+) = a ubiquinol + n Na(+)(out) + NAD(+). Its function is as follows. NQR complex catalyzes the reduction of ubiquinone-1 to ubiquinol by two successive reactions, coupled with the transport of Na(+) ions from the cytoplasm to the periplasm. NqrA to NqrE are probably involved in the second step, the conversion of ubisemiquinone to ubiquinol. The polypeptide is Na(+)-translocating NADH-quinone reductase subunit E (Cellvibrio japonicus (strain Ueda107) (Pseudomonas fluorescens subsp. cellulosa)).